Reading from the N-terminus, the 147-residue chain is Large ribosomal subunit protein uL22c (147 aa).

Belongs to the universal ribosomal protein uL22 family. In terms of assembly, part of the 50S ribosomal subunit.

It is found in the plastid. The protein resides in the chloroplast. This protein binds specifically to 23S rRNA. Its function is as follows. The globular domain of the protein is located near the polypeptide exit tunnel on the outside of the subunit, while an extended beta-hairpin is found that lines the wall of the exit tunnel in the center of the 70S ribosome. The protein is Large ribosomal subunit protein uL22c (rpl22) of Lolium perenne (Perennial ryegrass).